The following is a 286-amino-acid chain: Protein NipSnap homolog 2 (286 aa).

The transit peptide at 1–23 (MAARVLRARGAAWAGGLLQRAAP) directs the protein to the mitochondrion.

Belongs to the NipSnap family. In terms of assembly, interacts with CALCOCO2/NDP52, NBR1, SQSTM1/p62, TAX1BP1 and WDFY3/ALFY. Interacts with ATG8 family proteins (MAP1LC3A, MAP1LC3B, MAP1LC3C, GABARAP, GABARAPL1 and GABARAPL2). Interacts with VDAC1. Widely expressed. Most abundant in heart and skeletal muscle.

It is found in the mitochondrion matrix. Protein involved in mitophagy by facilitating recruitment of the autophagy machinery required for clearance of damaged mitochondria. Accumulates on the mitochondria surface in response to mitochondrial depolarization and acts as a 'eat me' signal by recruiting proteins involved in selective autophagy, such as autophagy receptors (CALCOCO2/NDP52, NBR1, SQSTM1/p62, TAX1BP1 and WDFY3/ALFY) and ATG8 family proteins (MAP1LC3A, MAP1LC3B, MAP1LC3C, GABARAP, GABARAPL1 and GABARAPL2). This chain is Protein NipSnap homolog 2, found in Homo sapiens (Human).